Here is a 118-residue protein sequence, read N- to C-terminus: Large ribosomal subunit protein bL17 (118 aa).

This sequence belongs to the bacterial ribosomal protein bL17 family. In terms of assembly, part of the 50S ribosomal subunit. Contacts protein L32.

This Phytoplasma australiense protein is Large ribosomal subunit protein bL17.